A 492-amino-acid polypeptide reads, in one-letter code: MAAKLRAHQVDVDPDFAPQSRPRSCTWPLPQPDLAGDEDGALGAGVAEGAEDCGPERRATAPAMAPAPPLGAEVGPLRKAKSSRRNAWGNLSYADLITKAIESAPDKRLTLSQIYDWMVRYVPYFKDKGDSNSSAGWKNSIRHNLSLHTRFIRVQNEGTGKSSWWMLNPEGGKTGKTPRRRAVSMDNGAKFLRIKGKASKKKQLQAPERSPDDSSPSAPAPGPVPAAAKWAASPASHASDDYEAWADFRGGGRPLLGEAAELEDDEALEALAPSSPLMYPSPASALSPALGSRCPGELPRLAELGGPLGLHGGGGAGLPEGLLDGAQDAYGPRPAPRPGPVLGAPGELALAGAAAAYPGKGAAPYAPPAPSRSALAHPISLMTLPGEAGAAGLAPPGHAAAFGGPPGGLLLDALPGPYAAAAAGPLGAAPDRFPADLDLDMFSGSLECDVESIILNDFMDSDEMDFNFDSALPPPPPGLAGAPPPNQSWVPG.

Disordered regions lie at residues 1–76, 163–235, 315–338, and 466–492; these read MAAK…EVGP, SWWM…ASPA, GAGL…APRP, and FNFD…WVPG. The segment at residues 88 to 182 is a DNA-binding region (fork-head); sequence WGNLSYADLI…KTGKTPRRRA (95 aa). Phosphoserine is present on serine 184. Over residues 192–203 the composition is skewed to basic residues; that stretch reads LRIKGKASKKKQ. A compositionally biased stretch (low complexity) spans 225–235; the sequence is PAAAKWAASPA. Residues 472–486 show a composition bias toward pro residues; that stretch reads LPPPPPGLAGAPPPN.

Post-translationally, phosphorylation of Ser-184 is be important in regulating the transacriptional activity.

It is found in the cytoplasm. Its subcellular location is the nucleus. Transcriptional activator. This is Forkhead box protein O6 (FOXO6) from Homo sapiens (Human).